The sequence spans 465 residues: Pancreatic triacylglycerol lipase (465 aa).

An N-terminal signal peptide occupies residues 1–16; sequence MLPLWTLSLLLGAVAG. 2 disulfide bridges follow: cysteine 20/cysteine 26 and cysteine 107/cysteine 118. The active-site Nucleophile is serine 169. Asparagine 183 is a glycosylation site (N-linked (GlcNAc...) asparagine). Aspartate 193 acts as the Charge relay system in catalysis. The Ca(2+) site is built by glutamate 204, arginine 207, aspartate 209, and aspartate 212. Cysteine 254 and cysteine 278 form a disulfide bridge. Catalysis depends on histidine 280, which acts as the Charge relay system. 3 disulfides stabilise this stretch: cysteine 302-cysteine 313, cysteine 316-cysteine 321, and cysteine 449-cysteine 465. The PLAT domain occupies 355-465; sequence WRYKVSVTLS…EEVLLTLTPC (111 aa).

This sequence belongs to the AB hydrolase superfamily. Lipase family. Forms a 1:1 stoichiometric complex with (pro)colipase/CLPS.

It is found in the secreted. It carries out the reaction a triacylglycerol + H2O = a diacylglycerol + a fatty acid + H(+). It catalyses the reaction 1,2,3-tributanoylglycerol + H2O = dibutanoylglycerol + butanoate + H(+). The enzyme catalyses 1,2,3-tri-(9Z-octadecenoyl)-glycerol + H2O = di-(9Z)-octadecenoylglycerol + (9Z)-octadecenoate + H(+). The catalysed reaction is all-trans-retinyl hexadecanoate + H2O = all-trans-retinol + hexadecanoate + H(+). It carries out the reaction 1,2-di-(9Z-octadecenoyl)-glycerol + H2O = (9Z-octadecenoyl)-glycerol + (9Z)-octadecenoate + H(+). Its activity is regulated as follows. Inhibited by bile salts, is reactivated by (pro)colipase/CLPS. Its function is as follows. Plays an important role in fat metabolism. It preferentially splits the esters of long-chain fatty acids at positions 1 and 3, producing mainly 2-monoacylglycerol and free fatty acids, and shows considerably higher activity against insoluble emulsified substrates than against soluble ones. The protein is Pancreatic triacylglycerol lipase of Homo sapiens (Human).